The chain runs to 291 residues: Ribosomal large subunit pseudouridine synthase B (291 aa).

Positions 3 to 63 (EKLQKVLARA…GHLISVKESA (61 aa)) constitute an S4 RNA-binding domain. Aspartate 110 serves as the catalytic Nucleophile.

It belongs to the pseudouridine synthase RsuA family.

It carries out the reaction uridine(2605) in 23S rRNA = pseudouridine(2605) in 23S rRNA. Responsible for synthesis of pseudouridine from uracil-2605 in 23S ribosomal RNA. The chain is Ribosomal large subunit pseudouridine synthase B (rluB) from Salmonella typhimurium (strain LT2 / SGSC1412 / ATCC 700720).